A 463-amino-acid polypeptide reads, in one-letter code: Argininosuccinate lyase (463 aa).

Belongs to the lyase 1 family. Argininosuccinate lyase subfamily.

It localises to the cytoplasm. It catalyses the reaction 2-(N(omega)-L-arginino)succinate = fumarate + L-arginine. Its pathway is amino-acid biosynthesis; L-arginine biosynthesis; L-arginine from L-ornithine and carbamoyl phosphate: step 3/3. The protein is Argininosuccinate lyase of Streptococcus pneumoniae serotype 2 (strain D39 / NCTC 7466).